A 157-amino-acid polypeptide reads, in one-letter code: Peptide methionine sulfoxide reductase MsrA (157 aa).

Cysteine 13 is a catalytic residue.

This sequence belongs to the MsrA Met sulfoxide reductase family.

It catalyses the reaction L-methionyl-[protein] + [thioredoxin]-disulfide + H2O = L-methionyl-(S)-S-oxide-[protein] + [thioredoxin]-dithiol. The enzyme catalyses [thioredoxin]-disulfide + L-methionine + H2O = L-methionine (S)-S-oxide + [thioredoxin]-dithiol. Its function is as follows. Has an important function as a repair enzyme for proteins that have been inactivated by oxidation. Catalyzes the reversible oxidation-reduction of methionine sulfoxide in proteins to methionine. The chain is Peptide methionine sulfoxide reductase MsrA from Methanococcus maripaludis (strain C6 / ATCC BAA-1332).